The chain runs to 402 residues: Secondary metabolism regulator laeA (402 aa).

The segment at 1 to 70 (MSLKYYLNDL…MSPTEVCSTD (70 aa)) is disordered. The span at 11–21 (SDSDSESESEC) shows a compositional bias: acidic residues.

This sequence belongs to the methyltransferase superfamily. LaeA methyltransferase family.

It localises to the nucleus. It catalyses the reaction L-methionyl-[protein] + S-adenosyl-L-methionine = S-methyl-L-methionyl-[protein] + S-adenosyl-L-homocysteine. Its function is as follows. Methyltransferase that performs automethylation. No other methyl-accepting substrate has been identified yet. Acts as a global regulator for secondary metabolite gene expression. Negatively regulates the production of coprinoferrin, a structurally novel acylated tripeptide hydroxamate siderophore. The sequence is that of Secondary metabolism regulator laeA from Coprinopsis cinerea (strain Okayama-7 / 130 / ATCC MYA-4618 / FGSC 9003) (Inky cap fungus).